Consider the following 196-residue polypeptide: Beta-crystallin A4 (196 aa).

The residue at position 2 (T2) is an N-acetylthreonine. The tract at residues 2–11 (TLQCTKSAGP) is N-terminal arm. Beta/gamma crystallin 'Greek key' domains lie at 12–51 (WKMV…KVLS) and 52–98 (GAWV…RPAA). Residues 99–104 (CANHRD) form a connecting peptide region. Beta/gamma crystallin 'Greek key' domains are found at residues 105–146 (SRLT…HVHS) and 147–195 (GAWV…RRIQ).

The protein belongs to the beta/gamma-crystallin family. As to quaternary structure, homo/heterodimer, or complexes of higher-order. The structure of beta-crystallin oligomers seems to be stabilized through interactions between the N-terminal arms.

In terms of biological role, crystallins are the dominant structural components of the vertebrate eye lens. In Homo sapiens (Human), this protein is Beta-crystallin A4 (CRYBA4).